The primary structure comprises 494 residues: Calmodulin-binding protein 60 A (494 aa).

Residues 1–62 are calmodulin-binding; it reads MRIPTYDFGS…AGIKWICEKE (62 aa). A DNA-binding region spans residues 132 to 252; the sequence is VSDWTDEDIR…AFHRRLNLSN (121 aa).

Belongs to the plant ACBP60 protein family. In terms of assembly, interacts with calmodulin (CaM). In terms of tissue distribution, expressed in stems, flowers and root.

It localises to the nucleus. Its function is as follows. Transcription activator that binds DNA in a sequence-specific manner, likely 5'-GAAATTTTGG-3', to promote the expression of target genes. This is Calmodulin-binding protein 60 A from Arabidopsis thaliana (Mouse-ear cress).